Reading from the N-terminus, the 144-residue chain is Protection of telomeres protein 1c (144 aa).

This sequence belongs to the telombin family. Expressed at extremely low levels at the limit of detection.

The protein localises to the nucleus. It localises to the chromosome. It is found in the telomere. Functionally, binds specifically single-stranded telomeric DNA with weak affinity. Has probably no function in the regulation of telomere length. The polypeptide is Protection of telomeres protein 1c (Arabidopsis thaliana (Mouse-ear cress)).